A 285-amino-acid chain; its full sequence is 4-diphosphocytidyl-2-C-methyl-D-erythritol kinase (285 aa).

Lys-10 is an active-site residue. ATP is bound at residue 93 to 103 (PIGGGLGGGSS). Residue Asp-135 is part of the active site.

The protein belongs to the GHMP kinase family. IspE subfamily.

It carries out the reaction 4-CDP-2-C-methyl-D-erythritol + ATP = 4-CDP-2-C-methyl-D-erythritol 2-phosphate + ADP + H(+). It functions in the pathway isoprenoid biosynthesis; isopentenyl diphosphate biosynthesis via DXP pathway; isopentenyl diphosphate from 1-deoxy-D-xylulose 5-phosphate: step 3/6. Catalyzes the phosphorylation of the position 2 hydroxy group of 4-diphosphocytidyl-2C-methyl-D-erythritol. In Ruthia magnifica subsp. Calyptogena magnifica, this protein is 4-diphosphocytidyl-2-C-methyl-D-erythritol kinase.